A 527-amino-acid polypeptide reads, in one-letter code: Peptide chain release factor 3 (527 aa).

Residues Asp10–Leu278 enclose the tr-type G domain. GTP-binding positions include Ser19 to Thr26, Asp87 to His91, and Asn141 to Asp144.

It belongs to the TRAFAC class translation factor GTPase superfamily. Classic translation factor GTPase family. PrfC subfamily.

The protein resides in the cytoplasm. Functionally, increases the formation of ribosomal termination complexes and stimulates activities of RF-1 and RF-2. It binds guanine nucleotides and has strong preference for UGA stop codons. It may interact directly with the ribosome. The stimulation of RF-1 and RF-2 is significantly reduced by GTP and GDP, but not by GMP. This Geobacter metallireducens (strain ATCC 53774 / DSM 7210 / GS-15) protein is Peptide chain release factor 3.